The chain runs to 413 residues: RING-H2 finger protein ATL54 (413 aa).

Residues 83-103 (ISIITITGAVLAILLTGFFLV) traverse the membrane as a helical segment. An RING-type; atypical zinc finger spans residues 177–219 (CPVCLNEFEEDESLRLLPKCNHAFHISCIDTWLSSHTNCPLCR). Disordered stretches follow at residues 238–258 (VTPGGSGSHLENDGVDEEDHG) and 321–413 (THVE…VFPL). Residues 387–401 (SSSTLKTNGSSSSVS) are compositionally biased toward low complexity. Polar residues predominate over residues 402–413 (CFNKNKSSVFPL).

The protein belongs to the RING-type zinc finger family. ATL subfamily.

The protein resides in the membrane. It carries out the reaction S-ubiquitinyl-[E2 ubiquitin-conjugating enzyme]-L-cysteine + [acceptor protein]-L-lysine = [E2 ubiquitin-conjugating enzyme]-L-cysteine + N(6)-ubiquitinyl-[acceptor protein]-L-lysine.. The protein operates within protein modification; protein ubiquitination. The sequence is that of RING-H2 finger protein ATL54 (ATL54) from Arabidopsis thaliana (Mouse-ear cress).